We begin with the raw amino-acid sequence, 620 residues long: Acetylcholinesterase 1 (620 aa).

The first 31 residues, 1-31, serve as a signal peptide directing secretion; it reads MRNSLLFFIFLPSTILAVDLIHLHDGSPLFG. Asn-74 carries N-linked (GlcNAc...) asparagine glycosylation. Cys-82 and Cys-109 are disulfide-bonded. Ser-216 serves as the catalytic Acyl-ester intermediate. Cysteines 270 and 286 form a disulfide. Residue Asn-272 is glycosylated (N-linked (GlcNAc...) asparagine). Active-site charge relay system residues include Glu-346 and His-468. Cysteines 430 and 558 form a disulfide. N-linked (GlcNAc...) asparagine glycosylation is found at Asn-486 and Asn-536.

It belongs to the type-B carboxylesterase/lipase family. In terms of assembly, oligomer composed of disulfide-linked homodimers.

It is found in the synapse. The protein resides in the secreted. The protein localises to the cell membrane. The enzyme catalyses acetylcholine + H2O = choline + acetate + H(+). Functionally, rapidly hydrolyzes acetylcholine and releases choline into the synapse. It can hydrolyze propionylcholine and butyrylthiocholine in vitro. This Caenorhabditis elegans protein is Acetylcholinesterase 1 (ace-1).